The chain runs to 203 residues: GTP cyclohydrolase-2 (203 aa).

49–53 (RIHSE) provides a ligand contact to GTP. C54, C65, and C67 together coordinate Zn(2+). GTP-binding positions include Q70, 92 to 94 (EGR), and T114. D126 (proton acceptor) is an active-site residue. R128 acts as the Nucleophile in catalysis. GTP-binding residues include T149 and K154.

The protein belongs to the GTP cyclohydrolase II family. Zn(2+) is required as a cofactor.

The enzyme catalyses GTP + 4 H2O = 2,5-diamino-6-hydroxy-4-(5-phosphoribosylamino)-pyrimidine + formate + 2 phosphate + 3 H(+). It participates in cofactor biosynthesis; riboflavin biosynthesis; 5-amino-6-(D-ribitylamino)uracil from GTP: step 1/4. Catalyzes the conversion of GTP to 2,5-diamino-6-ribosylamino-4(3H)-pyrimidinone 5'-phosphate (DARP), formate and pyrophosphate. The sequence is that of GTP cyclohydrolase-2 from Shewanella sp. (strain MR-4).